Here is a 286-residue protein sequence, read N- to C-terminus: Urease accessory protein UreD 2 (286 aa).

This sequence belongs to the UreD family. As to quaternary structure, ureD, UreF and UreG form a complex that acts as a GTP-hydrolysis-dependent molecular chaperone, activating the urease apoprotein by helping to assemble the nickel containing metallocenter of UreC. The UreE protein probably delivers the nickel.

It localises to the cytoplasm. In terms of biological role, required for maturation of urease via the functional incorporation of the urease nickel metallocenter. This chain is Urease accessory protein UreD 2, found in Bradyrhizobium sp. (strain ORS 278).